A 101-amino-acid chain; its full sequence is Small ribosomal subunit protein bS18c (101 aa).

Belongs to the bacterial ribosomal protein bS18 family. Part of the 30S ribosomal subunit.

The protein localises to the plastid. The protein resides in the chloroplast. The sequence is that of Small ribosomal subunit protein bS18c from Aethionema cordifolium (Lebanon stonecress).